A 162-amino-acid polypeptide reads, in one-letter code: Succinate dehydrogenase assembly factor 2-A, mitochondrial (162 aa).

Belongs to the SDHAF2 family. Interacts with the flavoprotein subunit within the SDH catalytic dimer.

It is found in the mitochondrion matrix. Plays an essential role in the assembly of succinate dehydrogenase (SDH), an enzyme complex (also referred to as respiratory complex II) that is a component of both the tricarboxylic acid (TCA) cycle and the mitochondrial electron transport chain, and which couples the oxidation of succinate to fumarate with the reduction of ubiquinone (coenzyme Q) to ubiquinol. Required for flavinylation (covalent attachment of FAD) of the flavoprotein subunit of the SDH catalytic dimer. In Drosophila yakuba (Fruit fly), this protein is Succinate dehydrogenase assembly factor 2-A, mitochondrial.